The primary structure comprises 56 residues: Conotoxin Cal6.41b (56 aa).

The first 23 residues, 1 to 23 (MSGSGAMLLGLLILVAMATSLDT), serve as a signal peptide directing secretion. 3 disulfide bridges follow: C27–C41, C33–C50, and C40–C54.

As to expression, expressed by the venom duct.

It is found in the secreted. Its function is as follows. Probable neurotoxin. The protein is Conotoxin Cal6.41b of Californiconus californicus (California cone).